Reading from the N-terminus, the 378-residue chain is Histidinol-phosphate aminotransferase (378 aa).

Residues 1–20 (MSVSAKETQRHPARPEPRPG) form a disordered region. Over residues 7–17 (ETQRHPARPEP) the composition is skewed to basic and acidic residues. Lys-232 carries the post-translational modification N6-(pyridoxal phosphate)lysine.

The protein belongs to the class-II pyridoxal-phosphate-dependent aminotransferase family. Histidinol-phosphate aminotransferase subfamily. In terms of assembly, homodimer. Pyridoxal 5'-phosphate serves as cofactor.

The catalysed reaction is L-histidinol phosphate + 2-oxoglutarate = 3-(imidazol-4-yl)-2-oxopropyl phosphate + L-glutamate. It participates in amino-acid biosynthesis; L-histidine biosynthesis; L-histidine from 5-phospho-alpha-D-ribose 1-diphosphate: step 7/9. The polypeptide is Histidinol-phosphate aminotransferase (Azorhizobium caulinodans (strain ATCC 43989 / DSM 5975 / JCM 20966 / LMG 6465 / NBRC 14845 / NCIMB 13405 / ORS 571)).